A 623-amino-acid polypeptide reads, in one-letter code: Quinoprotein ethanol dehydrogenase (623 aa).

Residues 1-34 (MTIRSLPAALSPLSMAVQAVLLVSSLALAPAANA) form the signal peptide. Residues Asp45 and Asn51 each coordinate Ca(2+). Glu95 contributes to the pyrroloquinoline quinone binding site. The cysteines at positions 139 and 140 are disulfide-linked. Pyrroloquinoline quinone contacts are provided by residues Arg145, Thr189, and 207 to 209 (HGS). Glu213 is a Ca(2+) binding site. Positions 242-279 (GRLNGKDSTPTGDVKAPSWPDDPTTETGKVESWSHGGG) are disordered. Ca(2+) is bound by residues Asn300 and Asp350. The Proton acceptor role is filled by Asp350. Residue Arg378 coordinates pyrroloquinoline quinone. The tract at residues 414-436 (RPVENEGQRPAKPLPGETKGKPV) is disordered. 2 WD repeats span residues 515 to 556 (EHNE…ELWK) and 559 to 601 (TGSG…LTKP). Positions 523 and 587 each coordinate pyrroloquinoline quinone.

Belongs to the bacterial PQQ dehydrogenase family. In terms of assembly, homodimer. The cofactor is pyrroloquinoline quinone. Requires Ca(2+) as cofactor.

Its subcellular location is the periplasm. The catalysed reaction is a primary alcohol + 2 Fe(III)-[cytochrome c] = an aldehyde + 2 Fe(II)-[cytochrome c] + 2 H(+). The enzyme catalyses ethanol + 2 Fe(III)-[cytochrome c] = acetaldehyde + 2 Fe(II)-[cytochrome c] + 2 H(+). It carries out the reaction ethanol + A = acetaldehyde + AH2. It catalyses the reaction 1-propanol + 2 Fe(III)-[cytochrome c] = propanal + 2 Fe(II)-[cytochrome c] + 2 H(+). It participates in alcohol metabolism; ethanol degradation; acetate from ethanol: step 1/2. Its activity is regulated as follows. Enhanced by the presence of ethylamine or NH4(+) ions. Its function is as follows. Catalyzes the oxidation of ethanol and other primary alcohols to the corresponding aldehydes, except methanol, which is not a substrate. Uses a specific inducible cytochrome c550, encoded by the adjacent gene in the locus, as electron acceptor. Is a key enzyme of the carbon and energy metabolism during growth of P.putida on ethanol as the sole carbon and energy source. Displays lower activity on secondary alcohols, aldehydes and diols. Is not active with sugar alcohols such as glycerol and D-sorbitol. In vitro, reacts well with phenazine methosulfate (PMS) as an electron acceptor but not with NAD(P), potassium ferricyanide, or molecular oxygen. The polypeptide is Quinoprotein ethanol dehydrogenase (Pseudomonas putida (Arthrobacter siderocapsulatus)).